The chain runs to 191 residues: Ribonuclease M5 (191 aa).

Residues 8–91 (HEFIVVEGRD…AFINRQDALP (84 aa)) form the Toprim domain. 3 residues coordinate Mg(2+): Glu-14, Asp-60, and Asp-62.

This sequence belongs to the ribonuclease M5 family. It depends on Mg(2+) as a cofactor.

The protein resides in the cytoplasm. It carries out the reaction Endonucleolytic cleavage of RNA, removing 21 and 42 nucleotides, respectively, from the 5'- and 3'-termini of a 5S-rRNA precursor.. Required for correct processing of both the 5' and 3' ends of 5S rRNA precursor. Cleaves both sides of a double-stranded region yielding mature 5S rRNA in one step. This is Ribonuclease M5 from Listeria monocytogenes serovar 1/2a (strain ATCC BAA-679 / EGD-e).